The sequence spans 208 residues: Small ribosomal subunit protein uS4 (208 aa).

The S4 RNA-binding domain occupies 98–158 (RRLDNIVYRL…EKSRKVASIN (61 aa)).

It belongs to the universal ribosomal protein uS4 family. In terms of assembly, part of the 30S ribosomal subunit. Contacts protein S5. The interaction surface between S4 and S5 is involved in control of translational fidelity.

Functionally, one of the primary rRNA binding proteins, it binds directly to 16S rRNA where it nucleates assembly of the body of the 30S subunit. Its function is as follows. With S5 and S12 plays an important role in translational accuracy. The sequence is that of Small ribosomal subunit protein uS4 from Geotalea daltonii (strain DSM 22248 / JCM 15807 / FRC-32) (Geobacter daltonii).